The chain runs to 258 residues: Thiazole synthase (258 aa).

The active-site Schiff-base intermediate with DXP is the Lys98. 1-deoxy-D-xylulose 5-phosphate-binding positions include Gly159, 185–186, and 207–208; these read AG and NT.

The protein belongs to the ThiG family. As to quaternary structure, homotetramer. Forms heterodimers with either ThiH or ThiS.

The protein resides in the cytoplasm. The catalysed reaction is [ThiS sulfur-carrier protein]-C-terminal-Gly-aminoethanethioate + 2-iminoacetate + 1-deoxy-D-xylulose 5-phosphate = [ThiS sulfur-carrier protein]-C-terminal Gly-Gly + 2-[(2R,5Z)-2-carboxy-4-methylthiazol-5(2H)-ylidene]ethyl phosphate + 2 H2O + H(+). Its pathway is cofactor biosynthesis; thiamine diphosphate biosynthesis. In terms of biological role, catalyzes the rearrangement of 1-deoxy-D-xylulose 5-phosphate (DXP) to produce the thiazole phosphate moiety of thiamine. Sulfur is provided by the thiocarboxylate moiety of the carrier protein ThiS. In vitro, sulfur can be provided by H(2)S. The chain is Thiazole synthase from Bacillus cereus (strain ATCC 14579 / DSM 31 / CCUG 7414 / JCM 2152 / NBRC 15305 / NCIMB 9373 / NCTC 2599 / NRRL B-3711).